The following is a 504-amino-acid chain: Probable GTP-binding protein OBGC2 (504 aa).

A compositionally biased stretch (basic and acidic residues) spans 24–39 (AHRDARPALRLPELHA). 2 disordered regions span residues 24–46 (AHRDARPALRLPELHATRRRRNN) and 93–122 (VLAMPASPSTDAPKSPRRRSDKGKRSGVKK). The region spanning 73 to 276 (HKYFDHAVVT…VSLELILRVV (204 aa)) is the Obg domain. Basic residues predominate over residues 107–122 (SPRRRSDKGKRSGVKK). Positions 277–494 (ADVGLVGLPN…MLKEIRAALR (218 aa)) constitute an OBG-type G domain. GTP is bound by residues 283 to 290 (GLPNAGKS) and 337 to 341 (DLPGL). Residues 436–452 (SEDSLNGNTGEHNTSSE) show a composition bias toward polar residues. Positions 436–463 (SEDSLNGNTGEHNTSSETKVEGGEKELR) are disordered. Positions 453 to 463 (TKVEGGEKELR) are enriched in basic and acidic residues.

Belongs to the TRAFAC class OBG-HflX-like GTPase superfamily. OBG GTPase family.

Functionally, may bind GTP and have GTPase activity. The protein is Probable GTP-binding protein OBGC2 of Oryza sativa subsp. japonica (Rice).